The sequence spans 337 residues: DNA-directed RNA polymerase subunit alpha (337 aa).

The segment at 1 to 231 (MRNITISAYT…KQLSVFDKIT (231 aa)) is alpha N-terminal domain (alpha-NTD). The tract at residues 248–337 (NTKLLQNITD…IAELKAQNEG (90 aa)) is alpha C-terminal domain (alpha-CTD).

It belongs to the RNA polymerase alpha chain family. As to quaternary structure, homodimer. The RNAP catalytic core consists of 2 alpha, 1 beta, 1 beta' and 1 omega subunit. When a sigma factor is associated with the core the holoenzyme is formed, which can initiate transcription.

The catalysed reaction is RNA(n) + a ribonucleoside 5'-triphosphate = RNA(n+1) + diphosphate. In terms of biological role, DNA-dependent RNA polymerase catalyzes the transcription of DNA into RNA using the four ribonucleoside triphosphates as substrates. The sequence is that of DNA-directed RNA polymerase subunit alpha from Campylobacter jejuni subsp. doylei (strain ATCC BAA-1458 / RM4099 / 269.97).